The primary structure comprises 153 residues: Cytochrome c oxidase subunit 5A, mitochondrial (153 aa).

A mitochondrion-targeting transit peptide spans 1 to 20; that stretch reads MLRNTFTRAGGLSRITSVRF. Over 21–88 the chain is Mitochondrial matrix; it reads AQTHALSNAA…EWGPRRPVLN (68 aa). A helical transmembrane segment spans residues 89 to 111; it reads KGDSSFIAKGVAAGLLFSVGLFA. Topologically, residues 112–153 are mitochondrial intermembrane; the sequence is VVRMAGGQDAKTMNKEWQLKSDEYLKSKNANPWGGYSQVQSK.

Belongs to the cytochrome c oxidase IV family. In terms of assembly, component of the cytochrome c oxidase (complex IV, CIV), a multisubunit enzyme composed of 12 subunits. The complex is composed of a catalytic core of 3 subunits COX1, COX2 and COX3, encoded in the mitochondrial DNA, and 9 supernumerary subunits COX4, COX5A (or COX5B), COX6, COX7, COX8, COX9, COX12, COX13 and COX26, which are encoded in the nuclear genome. COX5A is the predominant subunit V during aerobic/normoxic growth, it gets replaced by COX5B under anaerobic/hypoxic conditions. The complex exists as a monomer or a dimer and forms supercomplexes (SCs) in the inner mitochondrial membrane with a dimer of ubiquinol-cytochrome c oxidoreductase (cytochrome b-c1 complex, complex III, CIII), resulting in 2 different assemblies (supercomplexes III(2)IV and III(2)IV(2)). COX5A interacts with COR1, CYT1 and QCR6 at the CIII-CIV interface.

It localises to the mitochondrion inner membrane. Its pathway is energy metabolism; oxidative phosphorylation. In terms of biological role, component of the cytochrome c oxidase, the last enzyme in the mitochondrial electron transport chain which drives oxidative phosphorylation. The respiratory chain contains 3 multisubunit complexes succinate dehydrogenase (complex II, CII), ubiquinol-cytochrome c oxidoreductase (cytochrome b-c1 complex, complex III, CIII) and cytochrome c oxidase (complex IV, CIV), that cooperate to transfer electrons derived from NADH and succinate to molecular oxygen, creating an electrochemical gradient over the inner membrane that drives transmembrane transport and the ATP synthase. Cytochrome c oxidase is the component of the respiratory chain that catalyzes the reduction of oxygen to water. Electrons originating from reduced cytochrome c in the intermembrane space (IMS) are transferred via the dinuclear copper A center (CU(A)) of COX2 and heme A of COX1 to the active site in COX1, a binuclear center (BNC) formed by heme A3 and copper B (CU(B)). The BNC reduces molecular oxygen to 2 water molecules using 4 electrons from cytochrome c in the IMS and 4 protons from the mitochondrial matrix. The sequence is that of Cytochrome c oxidase subunit 5A, mitochondrial (COX5A) from Saccharomyces cerevisiae (strain ATCC 204508 / S288c) (Baker's yeast).